The primary structure comprises 221 residues: 2-amino-5-formylamino-6-ribosylaminopyrimidin-4(3H)-one 5'-monophosphate deformylase (221 aa).

Positions 29, 31, 40, and 108 each coordinate Fe cation.

The protein belongs to the creatininase superfamily. FAPy deformylase family. As to quaternary structure, homodimer. Fe(2+) serves as cofactor. It depends on Zn(2+) as a cofactor.

It carries out the reaction 2-amino-5-formylamino-6-(5-phospho-D-ribosylamino)pyrimidin-4(3H)-one + H2O = 2,5-diamino-6-(1-D-ribosylamino)pyrimidin-4(3H)-one 5'-phosphate + formate + H(+). Its pathway is cofactor biosynthesis; coenzyme F420 biosynthesis. It participates in cofactor biosynthesis; riboflavin biosynthesis. In terms of biological role, catalyzes the hydrolysis of the formamide of 2-amino-5-formylamino-6-ribosylamino-4(3H)-pyrimidinone 5'-monophosphate (FAPy) to form 2,5-diamino-6-ribosylamino-4(3H)-pyrimidinone 5'-phosphate (APy). The chain is 2-amino-5-formylamino-6-ribosylaminopyrimidin-4(3H)-one 5'-monophosphate deformylase from Methanococcus maripaludis (strain C5 / ATCC BAA-1333).